A 313-amino-acid polypeptide reads, in one-letter code: MLLTDRNTSGTTFTLLGFSDYPELQVPLFLVFLAIYNVTVLGNIGLIVIIKINPKLHTPMYFFLSQLSFVDFCYSSIIAPKMLVNLVVKDRTISFLGCVVQFFFFCTFVVTESFLLAVMAYDRFVAICNPLLYTVNMSQKLCVLLVVGSYAWGVSCSLELTCSALKLCFHGFNTINHFFCEFSSLLSLSCSDTYINQWLLFFLATFNEISTLLIVLTSYAFIVVTILKMRSVSGRRKAFSTCASHLTAITIFHGTILFLYCVPNSKNSRHTVKVASVFYTVVIPMLNPLIYSLRNKDVKDTVTEILDTKVFSY.

Over 1-26 the chain is Extracellular; it reads MLLTDRNTSGTTFTLLGFSDYPELQV. The N-linked (GlcNAc...) asparagine glycan is linked to Asn7. A helical transmembrane segment spans residues 27–47; the sequence is PLFLVFLAIYNVTVLGNIGLI. Residues 48–55 lie on the Cytoplasmic side of the membrane; that stretch reads VIIKINPK. The chain crosses the membrane as a helical span at residues 56–76; it reads LHTPMYFFLSQLSFVDFCYSS. Topologically, residues 77 to 100 are extracellular; the sequence is IIAPKMLVNLVVKDRTISFLGCVV. An intrachain disulfide couples Cys98 to Cys190. The helical transmembrane segment at 101–121 threads the bilayer; that stretch reads QFFFFCTFVVTESFLLAVMAY. Topologically, residues 122 to 140 are cytoplasmic; it reads DRFVAICNPLLYTVNMSQK. Residues 141–161 traverse the membrane as a helical segment; it reads LCVLLVVGSYAWGVSCSLELT. The Extracellular segment spans residues 162–197; sequence CSALKLCFHGFNTINHFFCEFSSLLSLSCSDTYINQ. The chain crosses the membrane as a helical span at residues 198–218; it reads WLLFFLATFNEISTLLIVLTS. At 219-238 the chain is on the cytoplasmic side; it reads YAFIVVTILKMRSVSGRRKA. The chain crosses the membrane as a helical span at residues 239 to 259; the sequence is FSTCASHLTAITIFHGTILFL. Residues 260 to 272 are Extracellular-facing; the sequence is YCVPNSKNSRHTV. Residues 273–293 form a helical membrane-spanning segment; that stretch reads KVASVFYTVVIPMLNPLIYSL. Residues 294–313 lie on the Cytoplasmic side of the membrane; the sequence is RNKDVKDTVTEILDTKVFSY.

The protein belongs to the G-protein coupled receptor 1 family.

The protein localises to the cell membrane. Odorant receptor. This is Olfactory receptor 5D18 (OR5D18) from Homo sapiens (Human).